We begin with the raw amino-acid sequence, 644 residues long: MFQDNPLLAQLKQQLHSQTPRAEGVVKATEKGFGFLEVDAQKSYFIPPPQMKKVMHGDRIIAVIHSEKERESAEPEELVEPFLTRFVGKVQGKNDRLAIVPDHPLLKDAIPCRAARGLNHEFKEGDWAVAEMRRHPLKGDRSFYAELTQYITFGDDHFVPWWVTLARHNLEKEAPDGVATEMLDEGLVREDLTALDFVTIDSASTEDMDDALFAKALPDDKLQLIVAIADPTAWIAEGSKLDKAAKIRAFTNYLPGFNIPMLPRELSDDLCSLRANEVRPVLACRMTLSADGTIEDNIEFFAATIESKAKLVYDQVSDWLENTGDWQPESEAIAEQVRLLAQICQRRGEWRHNHALVFKDRPDYRFILGEKGEVLDIVAEPRRIANRIVEEAMIAANICAARVLRDKLGFGIYNVHMGFDPANADALAALLKTHGLHVDAEEVLTLDGFCKLRRELDAQPTGFLDSRIRRFQSFAEISTEPGPHFGLGLEAYATWTSPIRKYGDMINHRLLKAVIKGETATRPQDEITVQMAERRRLNRMAERDVGDWLYARFLKDKAGTDTRFAAEIVDISRGGMRVRLVDNGAIAFIPAPFLHAVRDELVCSQENGTVQIKGETAYKVTDVIDVTIAEVRMETRSIIARPVA.

An RNB domain is found at 189-516 (REDLTALDFV…NHRLLKAVIK (328 aa)). In terms of domain architecture, S1 motif spans 561–643 (DTRFAAEIVD…ETRSIIARPV (83 aa)).

Belongs to the RNR ribonuclease family. RNase II subfamily.

The protein resides in the cytoplasm. The catalysed reaction is Exonucleolytic cleavage in the 3'- to 5'-direction to yield nucleoside 5'-phosphates.. In terms of biological role, involved in mRNA degradation. Hydrolyzes single-stranded polyribonucleotides processively in the 3' to 5' direction. The polypeptide is Exoribonuclease 2 (Escherichia coli (strain SMS-3-5 / SECEC)).